We begin with the raw amino-acid sequence, 131 residues long: Small ribosomal subunit protein uS8 (131 aa).

This sequence belongs to the universal ribosomal protein uS8 family. Part of the 30S ribosomal subunit. Contacts proteins S5 and S12.

Functionally, one of the primary rRNA binding proteins, it binds directly to 16S rRNA central domain where it helps coordinate assembly of the platform of the 30S subunit. The polypeptide is Small ribosomal subunit protein uS8 (Clostridium novyi (strain NT)).